Consider the following 210-residue polypeptide: Transcriptional regulator DauR (210 aa).

It belongs to the DauR family.

Its function is as follows. DauR represses the dauBAR operon. The polypeptide is Transcriptional regulator DauR (Pseudomonas aeruginosa (strain ATCC 15692 / DSM 22644 / CIP 104116 / JCM 14847 / LMG 12228 / 1C / PRS 101 / PAO1)).